Reading from the N-terminus, the 539-residue chain is Fusion glycoprotein F0 (539 aa).

An N-terminal signal peptide occupies residues 1-18 (MSWKVVIIFSLLITPQHG). 7 cysteine pairs are disulfide-bonded: cysteine 28/cysteine 407, cysteine 60/cysteine 182, cysteine 283/cysteine 311, cysteine 292/cysteine 301, cysteine 326/cysteine 335, cysteine 350/cysteine 361, and cysteine 384/cysteine 390. A glycan (N-linked (GlcNAc...) asparagine; by host) is linked at asparagine 57. The segment at 103-127 (FVLGAIALGVATAAAVTAGVAIAKT) is fusion peptide. Asparagine 172 carries N-linked (GlcNAc...) asparagine; by host glycosylation. Residues 329–331 (RGD) carry the Cell attachment site motif. Asparagine 353 carries an N-linked (GlcNAc...) asparagine; by host glycan. The helical transmembrane segment at 492-512 (IIVIILIAVLGSSMILVSIFI) threads the bilayer. The disordered stretch occupies residues 520–539 (PTGAPPELSGVTNNGFIPHS). The segment covering 529–539 (GVTNNGFIPHS) has biased composition (polar residues).

This sequence belongs to the paramyxoviruses fusion glycoprotein family. As to quaternary structure, homotrimer. Heterodimer with fusion protein F2; disulfide-linked. As a heterodimer with F2, interacts with host heparan sulfate. As a heterodimer with F2, interacts with host integrin ITGAV/ITGB1. Part of a complex composed of F1, F2 and G glycoproteins. Homotrimer. Heterodimer with fusion protein F1; disulfide-linked. As a heterodimer with F1, interacts with host heparan sulfate. As a heterodimer with F2, interacts with host integrin ITGAV/ITGB1. Part of a complex composed of F1, F2 and G glycoproteins. In terms of processing, the F glycoprotein is synthesized as a F0 inactive precursor that is heavily N-glycosylated and processed.

It localises to the virion membrane. The protein resides in the host cell membrane. Functionally, inactive precursor that is cleaved to give rise to the mature F1 and F2 fusion glycoproteins. Its function is as follows. Class I viral fusion protein. Under the current model, the protein has at least 3 conformational states: pre-fusion native state, pre-hairpin intermediate state, and post-fusion hairpin state. During viral and plasma cell membrane fusion, the coiled coil regions assume a trimer-of-hairpins structure, positioning the fusion peptide in close proximity to the C-terminal region of the ectodomain. The formation of this structure appears to drive apposition and subsequent fusion of viral and cellular membranes leading to delivery of the nucleocapsid into the cytoplasm. This fusion is pH independent and occurs at the plasma or endosomal membrane. The trimer of F1-F2 (F protein) also facilitates the attachment to host cell by binding to host heparan sulfate. Major determinant of the species specificity of RSV infection. The trimer of F1-F2 (F protein) also facilitates the attachment to host cell by binding to host heparan sulfate. This Human metapneumovirus (strain CAN97-83) (HMPV) protein is Fusion glycoprotein F0 (F).